Here is a 238-residue protein sequence, read N- to C-terminus: Zwei Ig domain protein zig-2 (238 aa).

A signal peptide spans 1–17; the sequence is MLKFTAISFVLLNAAES. The 100-residue stretch at 31–130 folds into the Ig-like C2-type 1 domain; sequence PLLKFTRTPN…NGLTKLEHVA (100 aa). N40 and N43 each carry an N-linked (GlcNAc...) asparagine glycan. A disulfide bridge connects residues C54 and C117. N137, N206, and N216 each carry an N-linked (GlcNAc...) asparagine glycan. An Ig-like C2-type 2 domain is found at 149-230; the sequence is PFISMTVDFR…NHFGETTAIT (82 aa). Cysteines 170 and 217 form a disulfide.

As to expression, expressed in PVT neurons and weakly in some head neurons.

Its subcellular location is the secreted. In terms of biological role, probably not involved in maintaining the position of ASI and ASH head neuron cell bodies and ventral nerve cord axons of PVQ, PVP, RMEV, AVK and HSN neurons. The sequence is that of Zwei Ig domain protein zig-2 from Caenorhabditis elegans.